The following is a 218-amino-acid chain: Glutathione S-transferase class-mu 26 kDa isozyme 51 (218 aa).

Positions 2–83 (PAKLGYWKIR…YIADKHGMLG (82 aa)) constitute a GST N-terminal domain. Glutathione contacts are provided by residues 7–8 (YW), 41–45 (WFGDK), 54–55 (NL), and 67–68 (QS). One can recognise a GST C-terminal domain in the interval 85-203 (TPEERARISM…ESEKFIKWPL (119 aa)). Residue tyrosine 111 participates in substrate binding.

The protein belongs to the GST superfamily. Mu family. In terms of assembly, homodimer.

Its subcellular location is the cytoplasm. The catalysed reaction is RX + glutathione = an S-substituted glutathione + a halide anion + H(+). Conjugation of reduced glutathione to a wide number of exogenous and endogenous hydrophobic electrophiles. Its function is as follows. GST isoenzymes appear to play a central role in the parasite detoxification system. Other functions are also suspected including a role in increasing the solubility of haematin in the parasite gut. This Fasciola hepatica (Liver fluke) protein is Glutathione S-transferase class-mu 26 kDa isozyme 51.